The chain runs to 538 residues: Phosphoenolpyruvate carboxykinase (ATP) (538 aa).

Residues R64, Y205, and K211 each coordinate substrate. Residues K211, H230, and 246-254 each bind ATP; that span reads GLSGTGKTT. Mn(2+)-binding residues include K211 and H230. Position 267 (D267) interacts with Mn(2+). Residues E295, R331, 447 to 448, and T453 contribute to the ATP site; that span reads RI. R331 provides a ligand contact to substrate.

This sequence belongs to the phosphoenolpyruvate carboxykinase (ATP) family. Monomer. It depends on Mn(2+) as a cofactor.

Its subcellular location is the cytoplasm. It carries out the reaction oxaloacetate + ATP = phosphoenolpyruvate + ADP + CO2. Its pathway is carbohydrate biosynthesis; gluconeogenesis. In terms of biological role, involved in the gluconeogenesis. Catalyzes the conversion of oxaloacetate (OAA) to phosphoenolpyruvate (PEP) through direct phosphoryl transfer between the nucleoside triphosphate and OAA. This is Phosphoenolpyruvate carboxykinase (ATP) from Haemophilus influenzae (strain ATCC 51907 / DSM 11121 / KW20 / Rd).